Consider the following 262-residue polypeptide: Protein crossbronx-like (262 aa).

The 165-residue stretch at 15–179 folds into the UBC core domain; the sequence is RQGYQVLAEY…VQELALFTKK (165 aa).

This sequence belongs to the ubiquitin-conjugating enzyme family. FTS subfamily.

The protein is Protein crossbronx-like of Drosophila pseudoobscura pseudoobscura (Fruit fly).